Here is a 162-residue protein sequence, read N- to C-terminus: MRIGHGFDVHKFGENGSGPLIIGGVRIPYEKGLLAHSDGDVALHAATDALLGAAALGDIGKLFPDTDPAFKGADSRGLLREAYRRILAKGYKLGNLDITIIAQAPKMAPHIPQMRVNLAEDLQCHMDDINVKATTTEQLGFTGRGEGIACEAVVLLVNVEQG.

A divalent metal cation contacts are provided by D8 and H10. 4-CDP-2-C-methyl-D-erythritol 2-phosphate contacts are provided by residues D8 to H10 and H36 to S37. Position 44 (H44) interacts with a divalent metal cation. 4-CDP-2-C-methyl-D-erythritol 2-phosphate-binding positions include D58–G60, F63–D67, A102–A108, T134–E137, F141, and R144.

The protein belongs to the IspF family. As to quaternary structure, homotrimer. A divalent metal cation is required as a cofactor.

The enzyme catalyses 4-CDP-2-C-methyl-D-erythritol 2-phosphate = 2-C-methyl-D-erythritol 2,4-cyclic diphosphate + CMP. The protein operates within isoprenoid biosynthesis; isopentenyl diphosphate biosynthesis via DXP pathway; isopentenyl diphosphate from 1-deoxy-D-xylulose 5-phosphate: step 4/6. Involved in the biosynthesis of isopentenyl diphosphate (IPP) and dimethylallyl diphosphate (DMAPP), two major building blocks of isoprenoid compounds. Catalyzes the conversion of 4-diphosphocytidyl-2-C-methyl-D-erythritol 2-phosphate (CDP-ME2P) to 2-C-methyl-D-erythritol 2,4-cyclodiphosphate (ME-CPP) with a corresponding release of cytidine 5-monophosphate (CMP). In Yersinia pseudotuberculosis serotype O:1b (strain IP 31758), this protein is 2-C-methyl-D-erythritol 2,4-cyclodiphosphate synthase.